Consider the following 525-residue polypeptide: MNDFWQHCSALLERELTPQQYVTWIKPLAPVAFDASANTLSIAAPNRFKLDWVKSQFSGRIADLAREFWNTPIEVQFVLDPKAGMRGAPAGVAPAAPRMPLTPNGPAAAVAAIAANLTAHASAAPSAPADVPLTPSAAAAHHLHGDDADIDLPSLPAHEAAAGRRTWRPGPGAAPANGAEADSMYERSKLNPVLTFDNFVTGKANQLARAAAIQVAHNPGISYNPLFLYGGVGLGKTHLIHAIGNQLLLDKAGARIRYIHAEQYVSDVVKAYQRKAFDDFKRYYHSLDLLLIDDIQFFSGKSRTQEEFFYAFEALVANKAQVIITSDTYPKEISGIDDRLISRFDSGLTVAIEPPELEMRVAILMRKAQSEGVNLSEDVAFFVAKHLRSNVRELEGALRKILAYSKFHGREISIELTKEALKDLLTVQNRQISVENIQKTVADFYNIKVADMYSKKRPANIARPRQIAMYLAKELTQKSLPEIGELFGGRDHTTVLHAVRKIADERGKDAQLNHELHVLEQTLKG.

The domain I, interacts with DnaA modulators stretch occupies residues 1 to 71 (MNDFWQHCSA…ADLAREFWNT (71 aa)). The tract at residues 71-188 (TPIEVQFVLD…AEADSMYERS (118 aa)) is domain II. Positions 160–181 (AAAGRRTWRPGPGAAPANGAEA) are disordered. Over residues 169 to 181 (PGPGAAPANGAEA) the composition is skewed to low complexity. The interval 189–405 (KLNPVLTFDN…GALRKILAYS (217 aa)) is domain III, AAA+ region. ATP contacts are provided by glycine 233, glycine 235, lysine 236, and threonine 237. Residues 406–525 (KFHGREISIE…LHVLEQTLKG (120 aa)) are domain IV, binds dsDNA.

The protein belongs to the DnaA family. As to quaternary structure, oligomerizes as a right-handed, spiral filament on DNA at oriC.

The protein localises to the cytoplasm. Its function is as follows. Plays an essential role in the initiation and regulation of chromosomal replication. ATP-DnaA binds to the origin of replication (oriC) to initiate formation of the DNA replication initiation complex once per cell cycle. Binds the DnaA box (a 9 base pair repeat at the origin) and separates the double-stranded (ds)DNA. Forms a right-handed helical filament on oriC DNA; dsDNA binds to the exterior of the filament while single-stranded (ss)DNA is stabiized in the filament's interior. The ATP-DnaA-oriC complex binds and stabilizes one strand of the AT-rich DNA unwinding element (DUE), permitting loading of DNA polymerase. After initiation quickly degrades to an ADP-DnaA complex that is not apt for DNA replication. Binds acidic phospholipids. This is Chromosomal replication initiator protein DnaA from Burkholderia vietnamiensis (strain G4 / LMG 22486) (Burkholderia cepacia (strain R1808)).